Consider the following 424-residue polypeptide: MSLDHHQFHQANSRNSKPYISYGIPFWRACAHHAKALNSHRIYIVASRSLSRSQALEDLKNALGLIHIVGEYNGIAQHTPWEQVFGLLRDLRQTQADLIITLGGGSVTDGVKLARLLAANNVTTLEQADSLLSHCEPGKPKPSDETVQPASIPVINVPTTLSGAEFTRAAGATNTQSDHKKRIIIHQSMYADIVVLDPELSLGTPARFWFSTGIRAVDHFVEGIYGNMATTMVQGDNSGSDQLIIEKDIQASLGALLVALLHTKDDWQNCDARLRQMLALKDCPRAGHNGVGASHGIGHQLGPFGVGHGETSCIILPCVLKYNWSHGDARLRAKLQLITDVFWGNAVLTKLLVDRGLHPQDTDPGDVIAAYISALGMPNSLAKYGIHEAQFHQIAENAMEDVCTQVNPVELDKNKVVEILYMAA.

Belongs to the iron-containing alcohol dehydrogenase family. Fe cation serves as cofactor.

It functions in the pathway mycotoxin biosynthesis. Dehydrogenase; part of the gene cluster that mediates the biosynthesis of fumonisins B1 (FB1), B2 (FB2), B3 (FB3), and B4 (FB4), which are carcinogenic mycotoxins. Within the pathway, FUM7 is involved the addition of the tricarballylic moieties to the carbon backbone. FUM7 dehydrogenase removes the C-3 hydroxyl of citrate to form tricarballylic acid either before or after the CoA activation by the FUM10 acyl-CoA synthetase and FUM14 catalyzed esterification of CoA-activated tricarballylic acid to the C-14 and C-15 hydroxyls of the fumonisin backbone. The biosynthesis starts with the FUM1-catalyzed carbon chain assembly from one molecule of acetyl-CoA, eight molecules of malonyl-CoA, and two molecules of methionine (in S-adenosyl form). The C18 polyketide chain is released from the enzyme by a nucleophilic attack of a carbanion, which is derived from R-carbon of alanine by decarboxylation, on the carbonyl carbon of polyketide acyl chain. This step is catalyzed by the pyridoxal 5'-phosphate-dependent aminoacyl transferase FUM8. The resultant 3-keto intermediate is then stereospecifically reduced to a 3-hydroxyl product by reductase FUM13. Subsequent oxidations at C-10 by the cytochrome P450 monooxygenase FUM2, C-14 and C-15 by FUM6, FUM12 or FUM15, tricarballylic esterification of the hydroxyl groups on C-14 and C-15 by acyltransferase FUM14, and C-5 hydroxylation by 2-keto-glutarate-dependent dioxygenase FUM3 furnish the biosynthesis of fumonisins. The tricarballylic moieties are most likely derived from the citric acid cycle, and their addition to the carbon backbone may involve FUM7, FUM10, FUM11 and FUM14. The chain is Dehydrogenase FUM7 from Gibberella moniliformis (strain M3125 / FGSC 7600) (Maize ear and stalk rot fungus).